A 360-amino-acid polypeptide reads, in one-letter code: 45 kDa calcium-binding protein (360 aa).

The first 29 residues, 1-29 (MVSKQAFLFSLGSLYLSLLFVFLLMDVYA), serve as a signal peptide directing secretion. Asn-33 carries an N-linked (GlcNAc...) asparagine glycan. EF-hand domains follow at residues 96 to 131 (RNRR…KTEE), 135 to 170 (EAVN…SKGF), 231 to 266 (MLKF…TVEN), 276 to 311 (WVRD…MNEY), and 312 to 347 (NALN…FTGS). Ca(2+) is bound by residues Asp-109, Asn-111, Asp-113, Gln-115, Glu-120, Asp-148, Asp-150, Asp-152, His-154, Glu-159, Asp-244, Asp-246, Asp-248, Lys-250, Glu-255, Asp-289, Asn-291, Asp-293, Glu-300, Asp-325, Asn-327, Asp-329, His-331, and Glu-336.

The protein belongs to the CREC family.

Its subcellular location is the golgi apparatus lumen. In terms of biological role, may regulate calcium-dependent activities in the endoplasmic reticulum lumen or post-ER compartment. The chain is 45 kDa calcium-binding protein (sdf4) from Xenopus tropicalis (Western clawed frog).